Here is a 428-residue protein sequence, read N- to C-terminus: GTPase Obg (428 aa).

Residues 1–158 (MFVDQVQVEV…RFIKLELKVL (158 aa)) form the Obg domain. In terms of domain architecture, OBG-type G spans 159-333 (ADVGLVGFPS…LMHKTAEVLK (175 aa)). GTP contacts are provided by residues 165-172 (GFPSVGKS), 190-194 (FTTLV), 212-215 (DLPG), 282-285 (TKMD), and 314-316 (SSL). Positions 172 and 192 each coordinate Mg(2+). In terms of domain architecture, OCT spans 350–428 (YKYQPEPALK…IDDFTFEFVE (79 aa)).

This sequence belongs to the TRAFAC class OBG-HflX-like GTPase superfamily. OBG GTPase family. As to quaternary structure, monomer. Mg(2+) serves as cofactor.

It localises to the cytoplasm. An essential GTPase which binds GTP, GDP and possibly (p)ppGpp with moderate affinity, with high nucleotide exchange rates and a fairly low GTP hydrolysis rate. Plays a role in control of the cell cycle, stress response, ribosome biogenesis and in those bacteria that undergo differentiation, in morphogenesis control. The protein is GTPase Obg of Lacticaseibacillus casei (strain BL23) (Lactobacillus casei).